The primary structure comprises 70 residues: U-scoloptoxin(20)-Sm1a (70 aa).

Positions 1–24 are cleaved as a signal peptide; the sequence is MKKRSQVFCIFIAMVLLILPLSMS.

The protein belongs to the scoloptoxin-20 family. Post-translationally, contains 3 disulfide bonds. Expressed by the venom gland.

Its subcellular location is the secreted. The polypeptide is U-scoloptoxin(20)-Sm1a (Scolopendra morsitans (Tanzanian blue ringleg centipede)).